The sequence spans 337 residues: Transaldolase (337 aa).

Positions 1–10 match the Nuclear localization signal motif; it reads MSGSPVKRQR. The active-site Schiff-base intermediate with substrate is Lys-142. Lys-219 bears the N6-acetyllysine mark. 2 positions are modified to phosphoserine: Ser-237 and Ser-256. N6-acetyllysine is present on residues Lys-269, Lys-286, and Lys-321.

The protein belongs to the transaldolase family. Type 1 subfamily. In terms of assembly, homodimer. Interacts with KPNA1 and KPNA4.

The protein resides in the nucleus. It is found in the cytoplasm. The enzyme catalyses D-sedoheptulose 7-phosphate + D-glyceraldehyde 3-phosphate = D-erythrose 4-phosphate + beta-D-fructose 6-phosphate. It functions in the pathway carbohydrate degradation; pentose phosphate pathway; D-glyceraldehyde 3-phosphate and beta-D-fructose 6-phosphate from D-ribose 5-phosphate and D-xylulose 5-phosphate (non-oxidative stage): step 2/3. In terms of biological role, catalyzes the rate-limiting step of the non-oxidative phase in the pentose phosphate pathway. Catalyzes the reversible conversion of sedheptulose-7-phosphate and D-glyceraldehyde 3-phosphate into erythrose-4-phosphate and beta-D-fructose 6-phosphate. The chain is Transaldolase (TALDO1) from Sus scrofa (Pig).